Reading from the N-terminus, the 317-residue chain is tRNA dimethylallyltransferase (317 aa).

Residue 14 to 21 participates in ATP binding; the sequence is GPTASGKT. 16-21 is a binding site for substrate; that stretch reads TASGKT. Interaction with substrate tRNA stretches follow at residues 39–42 and 163–167; these read DSAL and QRIQR.

Belongs to the IPP transferase family. Monomer. It depends on Mg(2+) as a cofactor.

The enzyme catalyses adenosine(37) in tRNA + dimethylallyl diphosphate = N(6)-dimethylallyladenosine(37) in tRNA + diphosphate. Its function is as follows. Catalyzes the transfer of a dimethylallyl group onto the adenine at position 37 in tRNAs that read codons beginning with uridine, leading to the formation of N6-(dimethylallyl)adenosine (i(6)A). The protein is tRNA dimethylallyltransferase of Stenotrophomonas maltophilia (strain K279a).